We begin with the raw amino-acid sequence, 367 residues long: GDSL esterase/lipase At4g28780 (367 aa).

Positions 1 to 28 (MSTFLLTWIIMTVALSVTLFLMPQQTNA) are cleaved as a signal peptide. S38 serves as the catalytic Nucleophile. N119 is a glycosylation site (N-linked (GlcNAc...) asparagine). Active-site residues include D328 and H331. N-linked (GlcNAc...) asparagine glycosylation occurs at N356.

This sequence belongs to the 'GDSL' lipolytic enzyme family.

It localises to the secreted. The protein is GDSL esterase/lipase At4g28780 of Arabidopsis thaliana (Mouse-ear cress).